Here is a 548-residue protein sequence, read N- to C-terminus: Chaperonin GroEL (548 aa).

ATP-binding positions include 29-32, Lys-50, 86-90, Gly-414, 478-480, and Asp-494; these read TMGP, DGTTT, and NAA.

It belongs to the chaperonin (HSP60) family. Forms a cylinder of 14 subunits composed of two heptameric rings stacked back-to-back. Interacts with the co-chaperonin GroES.

The protein localises to the cytoplasm. The enzyme catalyses ATP + H2O + a folded polypeptide = ADP + phosphate + an unfolded polypeptide.. Together with its co-chaperonin GroES, plays an essential role in assisting protein folding. The GroEL-GroES system forms a nano-cage that allows encapsulation of the non-native substrate proteins and provides a physical environment optimized to promote and accelerate protein folding. This Legionella pneumophila (strain Paris) protein is Chaperonin GroEL.